The chain runs to 377 residues: Cytochrome c peroxidase, mitochondrial (377 aa).

The N-terminal 17 residues, 1–17 (MSFRAPNLIRSAAGRRA), are a transit peptide targeting the mitochondrion. His138 functions as the Proton acceptor in the catalytic mechanism. His261 lines the heme b pocket. Catalysis depends on Trp277, which acts as the Tryptophan radical intermediate.

Belongs to the peroxidase family. Cytochrome c peroxidase subfamily. In terms of assembly, forms a one-to-one complex with cytochrome c. The cofactor is heme b.

It localises to the mitochondrion matrix. The protein localises to the mitochondrion intermembrane space. The enzyme catalyses 2 Fe(II)-[cytochrome c] + H2O2 + 2 H(+) = 2 Fe(III)-[cytochrome c] + 2 H2O. Destroys radicals which are normally produced within the cells and which are toxic to biological systems. The chain is Cytochrome c peroxidase, mitochondrial (CCP1) from Cryptococcus neoformans var. neoformans serotype D (strain JEC21 / ATCC MYA-565) (Filobasidiella neoformans).